The sequence spans 155 residues: Regulatory protein RecX (155 aa).

Belongs to the RecX family.

The protein localises to the cytoplasm. Its function is as follows. Modulates RecA activity. This Pseudomonas syringae pv. tomato (strain ATCC BAA-871 / DC3000) protein is Regulatory protein RecX.